The following is a 277-amino-acid chain: MPAYSTVRVGKKYSPSFKVYVTQDGKIVSPFHDIPLYMSGNREIVSVVNEIPRFENGKFEINKEEAFNPIKQDIKKGWPRFVKNVFPMKGYLWNYGALPQTWENPHEVDRHTGARGDNDPLDVIEIGRKRKEVGEVYQAKVLGSIALVDEGECDWKVVVIDVNDEKAKEINDIEDVRKVYEGLLEQTIFWFKNYKVPDGKPKNNFALDGKYMDKKFTVGIIKSAYENWCGMINSKSDTNICKENSTLMDKVDSPAIIQEDLSDEEVPECVHQFEFIK.

R80 contacts diphosphate. 3 residues coordinate Mg(2+): D117, D122, and D154.

This sequence belongs to the PPase family. The cofactor is Mg(2+).

Its subcellular location is the cytoplasm. It catalyses the reaction diphosphate + H2O = 2 phosphate + H(+). Involved in osmoadaptation. The polypeptide is Inorganic pyrophosphatase (IPP1) (Encephalitozoon cuniculi (strain GB-M1) (Microsporidian parasite)).